The sequence spans 229 residues: uncharacterized protein (229 aa).

Transmembrane regions (helical) follow at residues 1–21 (MFGTIFNTVMIIAGSIIGGIF), 32–52 (ILMQAMGFAAVALGINAITQH), 58–78 (YPILFIVSLAIGGLLGQIINL), 100–120 (TAVLLFCIGSLSILGPVEAAL), 139–159 (IVLASTFGFGIAAAALVLFSW), 178–198 (LINEITIVGGILILSSGLSIL), and 206–226 (LNLLPSLLIPPVVIFVIHAFG).

Its subcellular location is the cell membrane. This is an uncharacterized protein from Bacillus subtilis (strain 168).